A 364-amino-acid chain; its full sequence is tRNA/tmRNA (uracil-C(5))-methyltransferase (364 aa).

Gln186, Tyr214, Asn219, Glu235, and Asp295 together coordinate S-adenosyl-L-methionine. Cys320 serves as the catalytic Nucleophile. Residue Glu354 is the Proton acceptor of the active site.

The protein belongs to the class I-like SAM-binding methyltransferase superfamily. RNA M5U methyltransferase family. TrmA subfamily.

The enzyme catalyses uridine(54) in tRNA + S-adenosyl-L-methionine = 5-methyluridine(54) in tRNA + S-adenosyl-L-homocysteine + H(+). It carries out the reaction uridine(341) in tmRNA + S-adenosyl-L-methionine = 5-methyluridine(341) in tmRNA + S-adenosyl-L-homocysteine + H(+). Its function is as follows. Dual-specificity methyltransferase that catalyzes the formation of 5-methyluridine at position 54 (m5U54) in all tRNAs, and that of position 341 (m5U341) in tmRNA (transfer-mRNA). This Azoarcus sp. (strain BH72) protein is tRNA/tmRNA (uracil-C(5))-methyltransferase.